The primary structure comprises 319 residues: Cytochrome c biogenesis protein CcsA (319 aa).

The next 7 membrane-spanning stretches (helical) occupy residues 9–29 (ILTH…LITL), 44–64 (GVIG…AYSG), 71–91 (LYES…FPYF), 143–163 (MVLG…LLVI), 225–245 (IISL…VWAN), 259–273 (TWAF…IYLH), and 286–306 (AIVA…VNLL).

The protein belongs to the CcmF/CycK/Ccl1/NrfE/CcsA family. May interact with Ccs1.

It is found in the plastid. It localises to the chloroplast thylakoid membrane. Functionally, required during biogenesis of c-type cytochromes (cytochrome c6 and cytochrome f) at the step of heme attachment. This Oenothera biennis (German evening primrose) protein is Cytochrome c biogenesis protein CcsA.